A 207-amino-acid polypeptide reads, in one-letter code: Guanylate kinase (207 aa).

The 181-residue stretch at 4 to 184 (GTLYIVSAPS…AQMDFRSIIR (181 aa)) folds into the Guanylate kinase-like domain. Residue 11-18 (APSGAGKS) coordinates ATP.

Belongs to the guanylate kinase family.

Its subcellular location is the cytoplasm. The enzyme catalyses GMP + ATP = GDP + ADP. Essential for recycling GMP and indirectly, cGMP. In Aliivibrio fischeri (strain ATCC 700601 / ES114) (Vibrio fischeri), this protein is Guanylate kinase.